Reading from the N-terminus, the 41-residue chain is Large ribosomal subunit protein bL36 (41 aa).

The protein belongs to the bacterial ribosomal protein bL36 family.

This chain is Large ribosomal subunit protein bL36, found in Azorhizobium caulinodans (strain ATCC 43989 / DSM 5975 / JCM 20966 / LMG 6465 / NBRC 14845 / NCIMB 13405 / ORS 571).